The following is a 141-amino-acid chain: uncharacterized protein (141 aa).

This is an uncharacterized protein from Schizosaccharomyces pombe (strain 972 / ATCC 24843) (Fission yeast).